The sequence spans 651 residues: Peptide-N(4)-(N-acetyl-beta-glucosaminyl)asparagine amidase (651 aa).

Positions Glu29–Lys90 constitute a PUB domain. Zn(2+) is bound by residues Cys246, Cys249, Cys279, and Cys282. Cys305 serves as the catalytic Nucleophile. Residues His332 and Asp349 contribute to the active site. Residues Glu450–Leu651 enclose the PAW domain.

This sequence belongs to the transglutaminase-like superfamily. PNGase family. Zn(2+) is required as a cofactor.

The protein resides in the cytoplasm. It carries out the reaction Hydrolysis of an N(4)-(acetyl-beta-D-glucosaminyl)asparagine residue in which the glucosamine residue may be further glycosylated, to yield a (substituted) N-acetyl-beta-D-glucosaminylamine and a peptide containing an aspartate residue.. In terms of biological role, specifically deglycosylates the denatured form of N-linked glycoproteins in the cytoplasm and assists their proteasome-mediated degradation. Cleaves the beta-aspartyl-glucosamine (GlcNAc) of the glycan and the amide side chain of Asn, converting Asn to Asp. Prefers proteins containing high-mannose over those bearing complex type oligosaccharides. Can recognize misfolded proteins in the endoplasmic reticulum that are exported to the cytosol to be destroyed and deglycosylate them, while it has no activity toward native proteins. Deglycosylation is a prerequisite for subsequent proteasome-mediated degradation of some, but not all, misfolded glycoproteins. The chain is Peptide-N(4)-(N-acetyl-beta-glucosaminyl)asparagine amidase (NGLY1) from Gallus gallus (Chicken).